Here is a 394-residue protein sequence, read N- to C-terminus: ATP phosphoribosyltransferase regulatory subunit (394 aa).

The protein belongs to the class-II aminoacyl-tRNA synthetase family. HisZ subfamily. As to quaternary structure, heteromultimer composed of HisG and HisZ subunits.

The protein localises to the cytoplasm. Its pathway is amino-acid biosynthesis; L-histidine biosynthesis; L-histidine from 5-phospho-alpha-D-ribose 1-diphosphate: step 1/9. In terms of biological role, required for the first step of histidine biosynthesis. May allow the feedback regulation of ATP phosphoribosyltransferase activity by histidine. This chain is ATP phosphoribosyltransferase regulatory subunit, found in Saccharophagus degradans (strain 2-40 / ATCC 43961 / DSM 17024).